Here is a 299-residue protein sequence, read N- to C-terminus: GTPase Era (299 aa).

The region spanning 4–171 (KSGFVAILGR…ISLLTDNLEE (168 aa)) is the Era-type G domain. The G1 stretch occupies residues 12–19 (GRPNVGKS). 12–19 (GRPNVGKS) is a binding site for GTP. The G2 stretch occupies residues 38 to 42 (QTTRN). A G3 region spans residues 59–62 (DTPG). Residues 59-63 (DTPGI) and 121-124 (NKID) contribute to the GTP site. Positions 121 to 124 (NKID) are G4. Residues 150 to 152 (ISA) are G5. One can recognise a KH type-2 domain in the interval 202–280 (TQQEIPHSVA…YLETWVKVKK (79 aa)).

It belongs to the TRAFAC class TrmE-Era-EngA-EngB-Septin-like GTPase superfamily. Era GTPase family. Monomer.

The protein localises to the cytoplasm. It is found in the cell membrane. Functionally, an essential GTPase that binds both GDP and GTP, with rapid nucleotide exchange. Plays a role in 16S rRNA processing and 30S ribosomal subunit biogenesis and possibly also in cell cycle regulation and energy metabolism. This chain is GTPase Era, found in Streptococcus uberis (strain ATCC BAA-854 / 0140J).